The primary structure comprises 223 residues: N-(5'-phosphoribosyl)anthranilate isomerase (223 aa).

It belongs to the TrpF family.

The catalysed reaction is N-(5-phospho-beta-D-ribosyl)anthranilate = 1-(2-carboxyphenylamino)-1-deoxy-D-ribulose 5-phosphate. The protein operates within amino-acid biosynthesis; L-tryptophan biosynthesis; L-tryptophan from chorismate: step 3/5. The polypeptide is N-(5'-phosphoribosyl)anthranilate isomerase (Moorella thermoacetica (strain ATCC 39073 / JCM 9320)).